A 119-amino-acid polypeptide reads, in one-letter code: Ribonuclease P protein component (119 aa).

The protein belongs to the RnpA family. As to quaternary structure, consists of a catalytic RNA component (M1 or rnpB) and a protein subunit.

It catalyses the reaction Endonucleolytic cleavage of RNA, removing 5'-extranucleotides from tRNA precursor.. In terms of biological role, RNaseP catalyzes the removal of the 5'-leader sequence from pre-tRNA to produce the mature 5'-terminus. It can also cleave other RNA substrates such as 4.5S RNA. The protein component plays an auxiliary but essential role in vivo by binding to the 5'-leader sequence and broadening the substrate specificity of the ribozyme. This Histophilus somni (strain 129Pt) (Haemophilus somnus) protein is Ribonuclease P protein component.